Consider the following 329-residue polypeptide: Holliday junction branch migration complex subunit RuvB (329 aa).

The large ATPase domain (RuvB-L) stretch occupies residues 1–180 (MKNILQSTEC…FGIPIHLEFY (180 aa)). Residues Arg-20, Gly-61, Lys-64, Thr-65, Thr-66, 127–129 (EDF), Arg-170, Tyr-180, and Arg-217 each bind ATP. Position 65 (Thr-65) interacts with Mg(2+). Residues 181–252 (STEELTKVIQ…FADKALLRLG (72 aa)) form a small ATPAse domain (RuvB-S) region. Positions 255–329 (KLGLDRQDIQ…ISHLREQEYI (75 aa)) are head domain (RuvB-H). DNA contacts are provided by Arg-308 and Arg-313.

The protein belongs to the RuvB family. Homohexamer. Forms an RuvA(8)-RuvB(12)-Holliday junction (HJ) complex. HJ DNA is sandwiched between 2 RuvA tetramers; dsDNA enters through RuvA and exits via RuvB. An RuvB hexamer assembles on each DNA strand where it exits the tetramer. Each RuvB hexamer is contacted by two RuvA subunits (via domain III) on 2 adjacent RuvB subunits; this complex drives branch migration. In the full resolvosome a probable DNA-RuvA(4)-RuvB(12)-RuvC(2) complex forms which resolves the HJ.

The protein localises to the cytoplasm. The enzyme catalyses ATP + H2O = ADP + phosphate + H(+). Its function is as follows. The RuvA-RuvB-RuvC complex processes Holliday junction (HJ) DNA during genetic recombination and DNA repair, while the RuvA-RuvB complex plays an important role in the rescue of blocked DNA replication forks via replication fork reversal (RFR). RuvA specifically binds to HJ cruciform DNA, conferring on it an open structure. The RuvB hexamer acts as an ATP-dependent pump, pulling dsDNA into and through the RuvAB complex. RuvB forms 2 homohexamers on either side of HJ DNA bound by 1 or 2 RuvA tetramers; 4 subunits per hexamer contact DNA at a time. Coordinated motions by a converter formed by DNA-disengaged RuvB subunits stimulates ATP hydrolysis and nucleotide exchange. Immobilization of the converter enables RuvB to convert the ATP-contained energy into a lever motion, pulling 2 nucleotides of DNA out of the RuvA tetramer per ATP hydrolyzed, thus driving DNA branch migration. The RuvB motors rotate together with the DNA substrate, which together with the progressing nucleotide cycle form the mechanistic basis for DNA recombination by continuous HJ branch migration. Branch migration allows RuvC to scan DNA until it finds its consensus sequence, where it cleaves and resolves cruciform DNA. The chain is Holliday junction branch migration complex subunit RuvB from Ehrlichia chaffeensis (strain ATCC CRL-10679 / Arkansas).